The following is a 196-amino-acid chain: RNA pyrophosphohydrolase (196 aa).

The 144-residue stretch at 6–149 (GYRPNVGIVI…KRDVYRKVMK (144 aa)) folds into the Nudix hydrolase domain. The Nudix box signature appears at 38 to 59 (GGINDNESAEQAMYRELHEEVG).

This sequence belongs to the Nudix hydrolase family. RppH subfamily. The cofactor is a divalent metal cation.

Accelerates the degradation of transcripts by removing pyrophosphate from the 5'-end of triphosphorylated RNA, leading to a more labile monophosphorylated state that can stimulate subsequent ribonuclease cleavage. This is RNA pyrophosphohydrolase from Haemophilus influenzae (strain PittEE).